A 122-amino-acid polypeptide reads, in one-letter code: MKTLSTQRLLRGMLPVAMLMLMGAWQAPALAASCTQGSTCVTVDGSNSGAMSTEAARQSKQQFNDTKSLRNKVNTRVEKEFDKVDKAIDSEERCDDSLNVNAYWEPNTRKCLDRQTGRQINP.

The first 31 residues, 1-31 (MKTLSTQRLLRGMLPVAMLMLMGAWQAPALA), serve as a signal peptide directing secretion. A disordered region spans residues 46–71 (SNSGAMSTEAARQSKQQFNDTKSLRN).

It belongs to the UPF0482 family.

The chain is UPF0482 protein Spro_2288 from Serratia proteamaculans (strain 568).